The following is a 124-amino-acid chain: MIRMAFAVACGGVIGTLLRFALATWVSAQWPRHFYLATVAVNLLGCLLIGYLYATFLARPDISPELRGALIIGFLGALTTFSSFSLDALRLLESGQLATAFAYVGGSVLGGLLAAWAGLALARL.

A run of 4 helical transmembrane segments spans residues 6-26 (FAVACGGVIGTLLRFALATWV), 34-54 (FYLATVAVNLLGCLLIGYLYA), 69-89 (ALIIGFLGALTTFSSFSLDAL), and 101-121 (FAYVGGSVLGGLLAAWAGLAL). Na(+) is bound by residues glycine 76 and threonine 79.

Belongs to the fluoride channel Fluc/FEX (TC 1.A.43) family.

It is found in the cell inner membrane. It catalyses the reaction fluoride(in) = fluoride(out). Its activity is regulated as follows. Na(+) is not transported, but it plays an essential structural role and its presence is essential for fluoride channel function. Functionally, fluoride-specific ion channel. Important for reducing fluoride concentration in the cell, thus reducing its toxicity. The chain is Fluoride-specific ion channel FluC from Stutzerimonas stutzeri (strain A1501) (Pseudomonas stutzeri).